A 148-amino-acid chain; its full sequence is Large ribosomal subunit protein uL22c (148 aa).

This sequence belongs to the universal ribosomal protein uL22 family. Part of the 50S ribosomal subunit.

The protein resides in the plastid. Its subcellular location is the chloroplast. Its function is as follows. This protein binds specifically to 23S rRNA. The globular domain of the protein is located near the polypeptide exit tunnel on the outside of the subunit, while an extended beta-hairpin is found that lines the wall of the exit tunnel in the center of the 70S ribosome. The sequence is that of Large ribosomal subunit protein uL22c (rpl22) from Triticum aestivum (Wheat).